A 291-amino-acid polypeptide reads, in one-letter code: Nucleotide-binding protein LMHCC_0126 (291 aa).

13 to 20 (GMSGAGKT) contributes to the ATP binding site. 63 to 66 (DLRG) contributes to the GTP binding site.

It belongs to the RapZ-like family.

Functionally, displays ATPase and GTPase activities. The protein is Nucleotide-binding protein LMHCC_0126 of Listeria monocytogenes serotype 4a (strain HCC23).